Reading from the N-terminus, the 667-residue chain is Autophagy-related protein 20 (667 aa).

Positions 1-94 are disordered; that stretch reads MKQKKNRFGS…DESFKSTRAN (94 aa). Residues 38–47 are compositionally biased toward low complexity; sequence SSSSRSSSTQ. The segment covering 55–67 has biased composition (polar residues); the sequence is SLASVHTSDMHQS. Over residues 76 to 85 the composition is skewed to acidic residues; the sequence is DDNPFLDQDD. A PX domain is found at 185–331; that stretch reads KLINDRVQIL…DFLDPNNINW (147 aa). Arg-222, Ser-224, Lys-248, and Arg-297 together coordinate a 1,2-diacyl-sn-glycero-3-phospho-(1D-myo-inositol-3-phosphate). Residues 524 to 562 are disordered; sequence ELQRGVQPRNGNTASGASGNDESSVKKPQASKSQSSSYG. Positions 532–545 are enriched in polar residues; the sequence is RNGNTASGASGNDE. Residues 549-560 are compositionally biased toward low complexity; the sequence is KKPQASKSQSSS. A coiled-coil region spans residues 588 to 652; it reads QTTMANLIKE…SKYLKDYAKK (65 aa).

It belongs to the sorting nexin family.

The protein localises to the endosome membrane. It localises to the preautophagosomal structure membrane. Its function is as follows. Required for cytoplasm to vacuole transport (Cvt), pexophagy and mitophagy. Also involved in endoplasmic reticulum-specific autophagic process and is essential for the survival of cells subjected to severe ER stress. Functions in protein retrieval from the endocytic pathway. The polypeptide is Autophagy-related protein 20 (ATG20) (Vanderwaltozyma polyspora (strain ATCC 22028 / DSM 70294 / BCRC 21397 / CBS 2163 / NBRC 10782 / NRRL Y-8283 / UCD 57-17) (Kluyveromyces polysporus)).